We begin with the raw amino-acid sequence, 187 residues long: Large ribosomal subunit protein uL22 (187 aa).

The protein belongs to the universal ribosomal protein uL22 family.

This chain is Large ribosomal subunit protein uL22 (RPL17), found in Theileria annulata.